Reading from the N-terminus, the 518-residue chain is Putative Rieske 2Fe-2S iron-sulfur protein MSMEG_6410/MSMEI_6242 (518 aa).

Residue lysine 375 forms an Isoglutamyl lysine isopeptide (Lys-Gln) (interchain with Q-Cter in protein Pup) linkage. Residues 431-518 enclose the Rieske domain; the sequence is LYTFFKCLTD…KGHELRCQKL (88 aa). Residues cysteine 471, histidine 473, cysteine 491, and histidine 494 each coordinate [2Fe-2S] cluster.

The cofactor is [2Fe-2S] cluster.

The chain is Putative Rieske 2Fe-2S iron-sulfur protein MSMEG_6410/MSMEI_6242 from Mycolicibacterium smegmatis (strain ATCC 700084 / mc(2)155) (Mycobacterium smegmatis).